The following is a 510-amino-acid chain: Leucine-rich repeat-containing protein 53 (510 aa).

LRR repeat units follow at residues 34-55, 58-79, 82-102, 108-129, 132-153, 158-179, and 182-203; these read TTRV…NLSL, NLAL…ALDG, MLRT…TDHT, SLQV…WFRN, GLTR…SFGG, SLRH…AFRP, and QLQE…FTPL. The LRRCT domain maps to 214–271; the sequence is NQWSCTCDLHPLARFLRNYIKSSAHTLRNAKDLNCQPSTAAVAAAQSVLRLSETNCDP. Residues 294–314 form a helical membrane-spanning segment; that stretch reads LLTVLGFAGAVGLTCLGLVVF.

The protein resides in the membrane. The protein is Leucine-rich repeat-containing protein 53 (LRRC53) of Macaca fascicularis (Crab-eating macaque).